The sequence spans 199 residues: Riboflavin synthase (199 aa).

Lumazine-binding repeat units follow at residues 1–95 (MFSG…IGGH) and 96–188 (FVSG…VDTI). 2,4-dihydroxypteridine is bound by residues 4-6 (GII), 46-48 (CLT), 60-65 (DVTEET), 99-101 (GHV), K130, 139-141 (SLT), and 153-158 (SLIPET).

Homotrimer.

It carries out the reaction 2 6,7-dimethyl-8-(1-D-ribityl)lumazine + H(+) = 5-amino-6-(D-ribitylamino)uracil + riboflavin. The protein operates within cofactor biosynthesis; riboflavin biosynthesis; riboflavin from 2-hydroxy-3-oxobutyl phosphate and 5-amino-6-(D-ribitylamino)uracil: step 2/2. In terms of biological role, catalyzes the dismutation of two molecules of 6,7-dimethyl-8-ribityllumazine, resulting in the formation of riboflavin and 5-amino-6-(D-ribitylamino)uracil. The polypeptide is Riboflavin synthase (ribE) (Chlamydia trachomatis serovar D (strain ATCC VR-885 / DSM 19411 / UW-3/Cx)).